The sequence spans 969 residues: MTKETRQGEQNRPSYKESLNLLKTSFGMRANATLREPELQNFWADKGIDLELGLANKGPSFTLHDGPPYANGALHMGHALNKVLKDIINKFHIMRGHKVHFVPGWDCHGLPIELKVLQTLSNKERQALTPIQLRKKAAAYASKQVKGQMEGFKRWGIWGNWNKPYLTLQKEYESAQVKLFGQMVLKGYIYRGLKPVHWSPSSRTALAEAELEYPEAHTSPSVYVAFSVIHLPQSLSENLIKQGLELPGDEVELSKRLKVCIWTTTPWTLPANAAVSVNSNLDYSFVRHEEKGQILIFATELLEEVSEILGISFKQVANAKGESLKGILYKHPLYERTAPIVLGGSYITTQSGTGLVHTAPGHGIDDFKTGLQNNLEVFCPVDEKGIFTSEAGKFEGLNVLKDANKEIISSLEISGSLLKELPYVHKYPYDWRTKKPTIFRATEQWFASVEGFREDALKAIDDVEWLPESGRNRIQSMVRERGDWCISRQRTWGIPIPVFYKKNTNEILLNKETIDHIENLFAQYGADIWWEFDESKLLPPSLASESHHWQKGVDTMDVWFDSGSSWASVSCQRDELGYPADLYLEGTDQHRGWFQSSLLTSVAVNGHAPYKKVLTHGFALDENGRKMSKSLGNIIDPTVIINGGTNKKTDPAYGADVLRLWVSSVDYSVDVPIGSNILKQLSDVYRKVRNTSRYLLGNLHDFDPKKNSVDIDNLPILDKWMLNRTAEVIDEITLAFEKYEFSRFFQLLQSFCTVDLSNFYLDIAKDRLYVSAPDDPRRRACQTVMALIIEKLAGLISPVLCHMAEDIWQNIPYQLSEESVFKRGWPVSPSNWKRASLTEPISLIRELRTSVNRVLEGCRNRQELGSSLEAGLRLEITNQGLLDAIDFLAKNGDHDVDCIRDWFLVSQLQIGGEPWAEVLISQQFELGVIEISNARGYKCERCWHYEQDIGSCSEHPTLCGRCVTVMNRL.

The 'HIGH' region signature appears at 68-78 (PYANGALHMGH). Glutamate 585 contributes to the L-isoleucyl-5'-AMP binding site. Positions 626–630 (KMSKS) match the 'KMSKS' region motif. Lysine 629 is an ATP binding site. Residues cysteine 939, cysteine 942, cysteine 959, and cysteine 962 each coordinate Zn(2+).

It belongs to the class-I aminoacyl-tRNA synthetase family. IleS type 1 subfamily. In terms of assembly, monomer. It depends on Zn(2+) as a cofactor.

The protein resides in the cytoplasm. It catalyses the reaction tRNA(Ile) + L-isoleucine + ATP = L-isoleucyl-tRNA(Ile) + AMP + diphosphate. Functionally, catalyzes the attachment of isoleucine to tRNA(Ile). As IleRS can inadvertently accommodate and process structurally similar amino acids such as valine, to avoid such errors it has two additional distinct tRNA(Ile)-dependent editing activities. One activity is designated as 'pretransfer' editing and involves the hydrolysis of activated Val-AMP. The other activity is designated 'posttransfer' editing and involves deacylation of mischarged Val-tRNA(Ile). The polypeptide is Isoleucine--tRNA ligase (Prochlorococcus marinus (strain MIT 9211)).